The chain runs to 283 residues: MGGMGGGGLLDIYAMAWEHLRPGSSPVDWCEGNYLISSNIAEFVNTFSNFLFILLPPVLIMLFKEYGRFVTPGIHVIWVLLIVVGLSSMYFHATLSLIGQLLDELAILWVFMAAFSLFYPKRYYPKFVKNDRKTFSWLMLLSAIAATGLSWWKPIVNAFVLMFMSVPTMVMLYTELQRVSDQRVYRLGIRSTTVWAVAVFCWINDRIFCEAWSSINFPYLHGFWHIFIFIAAYTVLVLFAYFYVESELPQRQPLLKYWPKNEFEFGIPFISIRNPGKALRNTI.

Ca(2+)-binding residues include aspartate 28, tryptophan 29, glutamate 31, asparagine 33, and glutamate 42. 2 helical membrane-spanning segments follow: residues 43 to 63 (FVNTFSNFLFILLPPVLIMLF) and 69 to 89 (FVTPGIHVIWVLLIVVGLSSM). Zn(2+) is bound at residue histidine 92. 4 helical membrane passes run 98 to 118 (IGQLLDELAILWVFMAAFSLF), 134 to 151 (TFSWLMLLSAIAATGLSW), 154 to 174 (PIVNAFVLMFMSVPTMVMLYT), and 187 to 209 (LGIRSTTVWAVAVFCWINDRIFC). The Zn(2+) site is built by histidine 221 and histidine 225. A helical transmembrane segment spans residues 222–242 (GFWHIFIFIAAYTVLVLFAYF).

The protein belongs to the alkaline ceramidase family. Zn(2+) serves as cofactor. As to expression, expressed in the central midgut of late embryos. In brain, it is present at the interhemispheric junction and in groups of cells in the central brain.

It localises to the membrane. The catalysed reaction is an N-acylsphing-4-enine + H2O = sphing-4-enine + a fatty acid. Hydrolyzes the sphingolipid ceramide into sphingosine and free fatty acid. In Drosophila melanogaster (Fruit fly), this protein is Alkaline ceramidase (bwa).